The primary structure comprises 381 residues: DnaJ-related protein spj1 (381 aa).

The J domain maps to 5–74; it reads NFSQKQILGV…RKIYDAYGEE (70 aa). The interval 72-93 is disordered; that stretch reads GEEGLNGQPGGPGGGPGEGFPG. Over residues 78-93 the composition is skewed to gly residues; that stretch reads GQPGGPGGGPGEGFPG. The segment at 138 to 225 adopts a CR-type zinc-finger fold; sequence GGSFTLEIPV…CKGERVAEVV (88 aa). 4 CXXCXGXG motif repeats span residues 151 to 158, 172 to 179, 199 to 206, and 213 to 220; these read CSVCSGQG, CPVCGGSG, CNACNGNG, and CPRCKGER. The Prevents secretion from ER signature appears at 378–381; it reads FDEL.

The protein localises to the endoplasmic reticulum. The sequence is that of DnaJ-related protein spj1 (spj1) from Schizosaccharomyces pombe (strain 972 / ATCC 24843) (Fission yeast).